A 502-amino-acid polypeptide reads, in one-letter code: Glycerol kinase (502 aa).

Thr-14 provides a ligand contact to ADP. The ATP site is built by Thr-14, Thr-15, and Ser-16. Thr-14 contacts sn-glycerol 3-phosphate. An ADP-binding site is contributed by Arg-18. The sn-glycerol 3-phosphate site is built by Arg-84, Glu-85, Tyr-136, and Asp-246. Glycerol-binding residues include Arg-84, Glu-85, Tyr-136, Asp-246, and Gln-247. Thr-268 and Gly-311 together coordinate ADP. ATP-binding residues include Thr-268, Gly-311, Gln-315, and Gly-412. Residues Gly-412 and Asn-416 each contribute to the ADP site.

The protein belongs to the FGGY kinase family. In terms of assembly, homotetramer and homodimer (in equilibrium). Heterodimer with EIIA-Glc. Binds 1 zinc ion per glycerol kinase EIIA-Glc dimer. The zinc ion is important for dimerization.

It carries out the reaction glycerol + ATP = sn-glycerol 3-phosphate + ADP + H(+). Its pathway is polyol metabolism; glycerol degradation via glycerol kinase pathway; sn-glycerol 3-phosphate from glycerol: step 1/1. Its activity is regulated as follows. Activity of this regulatory enzyme is affected by several metabolites. Allosterically and non-competitively inhibited by fructose 1,6-bisphosphate (FBP) and unphosphorylated phosphocarrier protein EIIA-Glc (III-Glc), an integral component of the bacterial phosphotransferase (PTS) system. Key enzyme in the regulation of glycerol uptake and metabolism. Catalyzes the phosphorylation of glycerol to yield sn-glycerol 3-phosphate. The chain is Glycerol kinase from Salmonella agona (strain SL483).